The following is a 324-amino-acid chain: Beta-ketoacyl-[acyl-carrier-protein] synthase III (324 aa).

Active-site residues include C112 and H249. Residues 250-254 (QANRR) form an ACP-binding region. The active site involves N279.

Belongs to the thiolase-like superfamily. FabH family. In terms of assembly, homodimer.

Its subcellular location is the cytoplasm. The catalysed reaction is malonyl-[ACP] + acetyl-CoA + H(+) = 3-oxobutanoyl-[ACP] + CO2 + CoA. Its pathway is lipid metabolism; fatty acid biosynthesis. Catalyzes the condensation reaction of fatty acid synthesis by the addition to an acyl acceptor of two carbons from malonyl-ACP. Catalyzes the first condensation reaction which initiates fatty acid synthesis and may therefore play a role in governing the total rate of fatty acid production. Possesses both acetoacetyl-ACP synthase and acetyl transacylase activities. Its substrate specificity determines the biosynthesis of branched-chain and/or straight-chain of fatty acids. This Streptococcus pyogenes serotype M2 (strain MGAS10270) protein is Beta-ketoacyl-[acyl-carrier-protein] synthase III.